Consider the following 426-residue polypeptide: Glutamate-1-semialdehyde 2,1-aminomutase (426 aa).

Lys-265 carries the N6-(pyridoxal phosphate)lysine modification.

The protein belongs to the class-III pyridoxal-phosphate-dependent aminotransferase family. HemL subfamily. In terms of assembly, homodimer. Pyridoxal 5'-phosphate serves as cofactor.

The protein localises to the cytoplasm. The catalysed reaction is (S)-4-amino-5-oxopentanoate = 5-aminolevulinate. It participates in porphyrin-containing compound metabolism; protoporphyrin-IX biosynthesis; 5-aminolevulinate from L-glutamyl-tRNA(Glu): step 2/2. The chain is Glutamate-1-semialdehyde 2,1-aminomutase from Enterobacter sp. (strain 638).